Consider the following 311-residue polypeptide: Heme A synthase (311 aa).

Topologically, residues 1 to 6 (MQRFIK) are cytoplasmic. The helical transmembrane segment at 7–27 (WLAVITSLDLLIVLLGGALVT) threads the bilayer. Residues 28–62 (KTGSGQGCGKSWPLCNGEFVPSNLSMETIIELSHR) are Extracellular-facing. A disulfide bridge connects residues C35 and C42. E58 is an active-site residue. Heme o is bound at residue H61. Residues 63–83 (LTSGSAGILVTLLCILSWKYY) form a helical membrane-spanning segment. Residues 84 to 91 (KHVRETKT) are Cytoplasmic-facing. The chain crosses the membrane as a helical span at residues 92 to 112 (LAILSFVFLVAQALMGAAAVV). Over 113–121 (WGQMPAVLA) the chain is Extracellular. Residues 122-142 (IHFGISLISFASVILLTCLIF) traverse the membrane as a helical segment. A heme o-binding site is contributed by H123. Topologically, residues 143-159 (EIDQKFDARSLIMDKKM) are cytoplasmic. A helical membrane pass occupies residues 160-180 (KFHIYGVTIYSYIVVYTGALV). Topologically, residues 181–211 (RHERASLACPDFPLCSKNRPMPTQLHEWVQM) are extracellular. Cysteines 189 and 195 form a disulfide. The helical transmembrane segment at 212–232 (GHRVAAMLIFAWILYAMILAI) threads the bilayer. H213 contributes to the heme b binding site. The Cytoplasmic segment spans residues 233–243 (RHYKQQPVVYW). The chain crosses the membrane as a helical span at residues 244–264 (GWIISFILVTLQAIVGILVVF). Topologically, residues 265–271 (TNASLSM) are extracellular. The chain crosses the membrane as a helical span at residues 272-292 (ALLHSLFISCLFAVLCYLVML). Heme b is bound at residue H275. Over 293–311 (GTRSKVNAKEAASISKQTK) the chain is Cytoplasmic.

Belongs to the COX15/CtaA family. Type 1 subfamily. In terms of assembly, interacts with CtaB. Requires heme b as cofactor.

The protein localises to the cell membrane. The enzyme catalyses Fe(II)-heme o + 2 A + H2O = Fe(II)-heme a + 2 AH2. The protein operates within porphyrin-containing compound metabolism; heme A biosynthesis; heme A from heme O: step 1/1. Its function is as follows. Catalyzes the conversion of heme O to heme A by two successive hydroxylations of the methyl group at C8. The first hydroxylation forms heme I, the second hydroxylation results in an unstable dihydroxymethyl group, which spontaneously dehydrates, resulting in the formyl group of heme A. The polypeptide is Heme A synthase (Bacillus cereus (strain AH187)).